Reading from the N-terminus, the 384-residue chain is Adaptive-response sensory kinase SasA (384 aa).

Residues 162–384 (MLAHDLRSPL…SFHFTLPVYR (223 aa)) enclose the Histidine kinase domain. His-165 bears the Phosphohistidine; by autocatalysis mark.

In terms of assembly, homooligomerizes. Interacts with KaiC. Participates in the KaiABC clock complex, whose core is composed of a KaiC homohexamer, 6 KaiB and up to 6 KaiA dimers. SasA and KaiB(fs) compete to bind to KaiC.

It carries out the reaction ATP + protein L-histidine = ADP + protein N-phospho-L-histidine.. Functionally, member of the two-component regulatory system SasA/RpaA involved in genome-wide circadian gene expression. One of several clock output pathways. Participates in the Kai clock protein complex, the main circadian regulator in cyanobacteria, via its interaction with KaiC. KaiC enhances the autophosphorylation activity of SasA, which then transfers its phosphate group to RpaA to activate it. In addition to its output function, recruits fold-shifted KaiB (KaiB(fs)) to KaiC to cooperatively form the KaiB(6):KaiC(6) complex (independent of SasA kinase activity). Required for robustness of the circadian rhythm of gene expression and is involved in clock output, also required for adaptation to light/dark cycles. The polypeptide is Adaptive-response sensory kinase SasA (Microcystis aeruginosa (strain NIES-843 / IAM M-2473)).